An 847-amino-acid polypeptide reads, in one-letter code: Endo-beta-N-acetylglucosaminidase EndoSd (847 aa).

An N-terminal signal peptide occupies residues 1–36 (MDKRLLVKRTLGCVCAATLMGAILATHHDSLISVKA). One can recognise a GH18 domain in the interval 65–377 (PLYAGYFRTW…HPVVDNISHT (313 aa)). H107 is a binding site for a glycoprotein. The Proton donor role is filled by E186. Residues E188, Q250, Y252, E288, E289, N295, and Y339 each contribute to the a glycoprotein site. LRR repeat units lie at residues 423–446 (LERY…LEKL), 447–470 (SHLQ…ILPE), 483–506 (MTGL…DVNG), and 507–530 (LTHL…ADRK). Residues 683–836 (MENLAKGAKV…YTELQILGQR (154 aa)) form a carbohydrate-binding module (CBM) region. Residues K704, D707, and E829 each contribute to the Ca(2+) site.

This sequence belongs to the glycosyl hydrolase 18 family.

The protein localises to the secreted. The protein resides in the host extracellular space. It catalyses the reaction an N(4)-(oligosaccharide-(1-&gt;3)-[oligosaccharide-(1-&gt;6)]-beta-D-Man-(1-&gt;4)-beta-D-GlcNAc-(1-&gt;4)-alpha-D-GlcNAc)-L-asparaginyl-[protein] + H2O = an oligosaccharide-(1-&gt;3)-[oligosaccharide-(1-&gt;6)]-beta-D-Man-(1-&gt;4)-D-GlcNAc + N(4)-(N-acetyl-beta-D-glucosaminyl)-L-asparaginyl-[protein]. Its function is as follows. Endoglucosidase that acts as a host immune evasion factor by mediating hydrolysis of the N-linked glycan from the Fc region of host immunoglobulin-gamma (IgG) during infection. Specifically catalyzes the hydrolysis of the beta-1,4 linkage between the first two N-acetylglucosamine residues of the complex-type N-linked glycan located on 'Asn-297' of the Fc region of IgG antibodies (IGHG1, IGHG2, IGHG3 or IGHG4), thereby preventing interaction between IgGs and Fc receptors and ability to activate the complement pathway. Shows a specificity for biantennary complex type N-glycans; does neither cleave larger complex type glycans nor oligomannose and nor hybrid-type glycans. Specifically acts on IgGs; does not act on immunoglobulin alpha, beta, delta or mu. In Streptococcus dysgalactiae, this protein is Endo-beta-N-acetylglucosaminidase EndoSd.